We begin with the raw amino-acid sequence, 124 residues long: MATTKEDVLEFISNLSVLELSELVKEFEEKFGVTAQATVVAAGGAAAGGEAAEEQTEFNVVLTDAGAKKINAIKVVRAITGLGLKEAKAAVEETPTVLKEGVSKEEAEEFKKQIEEAGASCELK.

This sequence belongs to the bacterial ribosomal protein bL12 family. Homodimer. Part of the ribosomal stalk of the 50S ribosomal subunit. Forms a multimeric L10(L12)X complex, where L10 forms an elongated spine to which 2 to 4 L12 dimers bind in a sequential fashion. Binds GTP-bound translation factors.

In terms of biological role, forms part of the ribosomal stalk which helps the ribosome interact with GTP-bound translation factors. Is thus essential for accurate translation. The protein is Large ribosomal subunit protein bL12 of Sulfurovum sp. (strain NBC37-1).